The chain runs to 282 residues: MFDKPRLPYVVLDVICVLLAGLPFIILTSRHTPFQRGVFCTDESIKYPYREDTIPYALLGGIVIPFCIIVMITGETLSVYFNVLHSNSFVSNHYIATIYKAVGAFLFGASASQSLTDIAKYSIGRLRPHFLAVCNPDWSKINCSDGYIENFVCQGNEQKVREGRLSFYSGHSSFSMYCMLFVALYLQARMKGDWARLLRPMLQFGLVALSIYVGLSRVSDYKHHWSDVLIGLIQGAVVAILVVLYVTDFFKTTESNKERKEDSHTTLHETTNRQSYARNHEP.

Over 1-6 the chain is Cytoplasmic; it reads MFDKPR. The PDZ-binding; involved in localization to the apical cell membrane motif lies at 5–7; it reads PRL. The chain crosses the membrane as a helical span at residues 7 to 27; sequence LPYVVLDVICVLLAGLPFIIL. Residues 28-53 are Extracellular-facing; sequence TSRHTPFQRGVFCTDESIKYPYREDT. The chain crosses the membrane as a helical span at residues 54–74; that stretch reads IPYALLGGIVIPFCIIVMITG. The Cytoplasmic segment spans residues 75–88; the sequence is ETLSVYFNVLHSNS. The helical transmembrane segment at 89-109 threads the bilayer; sequence FVSNHYIATIYKAVGAFLFGA. Over 110-164 the chain is Extracellular; the sequence is SASQSLTDIAKYSIGRLRPHFLAVCNPDWSKINCSDGYIENFVCQGNEQKVREGR. The segment at 120–128 is phosphatase sequence motif I; the sequence is KYSIGRLRP. The N-linked (GlcNAc...) asparagine glycan is linked to asparagine 142. The helical transmembrane segment at 165–185 threads the bilayer; that stretch reads LSFYSGHSSFSMYCMLFVALY. The phosphatase sequence motif II stretch occupies residues 168-171; it reads YSGH. The Proton donors role is filled by histidine 171. Over 186-194 the chain is Cytoplasmic; sequence LQARMKGDW. Residues 195-215 form a helical membrane-spanning segment; the sequence is ARLLRPMLQFGLVALSIYVGL. Positions 216–227 are phosphatase sequence motif III; it reads SRVSDYKHHWSD. The Extracellular portion of the chain corresponds to 216–229; sequence SRVSDYKHHWSDVL. Histidine 223 (nucleophile) is an active-site residue. A helical membrane pass occupies residues 230 to 250; it reads IGLIQGAVVAILVVLYVTDFF. Topologically, residues 251–282 are cytoplasmic; it reads KTTESNKERKEDSHTTLHETTNRQSYARNHEP. Positions 257–271 are enriched in basic and acidic residues; it reads KERKEDSHTTLHETT. The tract at residues 257–282 is disordered; the sequence is KERKEDSHTTLHETTNRQSYARNHEP. Residues 272-282 show a composition bias toward polar residues; sequence NRQSYARNHEP.

It belongs to the PA-phosphatase related phosphoesterase family. In terms of assembly, forms functional homodimers and homooligomers that are not required for substrate recognition and catalytic activity. Can also form heterooligomers with PLPP2 and PLPP3. In terms of processing, N-glycosylated. N-linked sugars are of the complex type. N-glycosylation is not required for the phosphatase activity.

It localises to the cell membrane. The protein resides in the apical cell membrane. The protein localises to the membrane raft. It is found in the membrane. Its subcellular location is the caveola. The catalysed reaction is a 1,2-diacyl-sn-glycero-3-phosphate + H2O = a 1,2-diacyl-sn-glycerol + phosphate. The enzyme catalyses 1,2-dihexadecanoyl-sn-glycero-3-phosphate + H2O = 1,2-dihexadecanoyl-sn-glycerol + phosphate. It carries out the reaction 1,2-di-(9Z-octadecenoyl)-sn-glycero-3-phosphate + H2O = 1,2-di-(9Z-octadecenoyl)-sn-glycerol + phosphate. It catalyses the reaction a monoacyl-sn-glycero-3-phosphate + H2O = a monoacylglycerol + phosphate. The catalysed reaction is (9Z)-octadecenoyl-sn-glycero-3-phosphate + H2O = (9Z-octadecenoyl)-glycerol + phosphate. The enzyme catalyses a 1-acyl-sn-glycero-3-phosphate + H2O = a 1-acyl-sn-glycerol + phosphate. It carries out the reaction 1-(9Z-octadecenoyl)-sn-glycero-3-phosphate + H2O = 1-(9Z-octadecenoyl)-sn-glycerol + phosphate. It catalyses the reaction a 1,2-diacyl-sn-glycerol 3-diphosphate + H2O = a 1,2-diacyl-sn-glycero-3-phosphate + phosphate + H(+). The catalysed reaction is sphing-4-enine 1-phosphate + H2O = sphing-4-enine + phosphate. The enzyme catalyses an N-acylsphing-4-enine 1-phosphate + H2O = an N-acylsphing-4-enine + phosphate. It carries out the reaction N-(octanoyl)-sphing-4-enine-1-phosphate + H2O = N-octanoylsphing-4-enine + phosphate. It catalyses the reaction N-(9Z-octadecenoyl)-ethanolamine phosphate + H2O = N-(9Z-octadecenoyl) ethanolamine + phosphate. The catalysed reaction is 1-hexadecanoyl-2-(9Z-octadecenoyl)-sn-glycero-3-phosphate + H2O = 1-hexadecanoyl-2-(9Z-octadecenoyl)-sn-glycerol + phosphate. Its pathway is lipid metabolism; phospholipid metabolism. Magnesium-independent phospholipid phosphatase. Insensitive to N-ethylmaleimide. Its function is as follows. Magnesium-independent phospholipid phosphatase of the plasma membrane that catalyzes the dephosphorylation of a variety of glycerolipid and sphingolipid phosphate esters including phosphatidate/PA, lysophosphatidate/LPA, diacylglycerol pyrophosphate/DGPP, sphingosine 1-phosphate/S1P and ceramide 1-phosphate/C1P. Also acts on N-oleoyl ethanolamine phosphate/N-(9Z-octadecenoyl)-ethanolamine phosphate, a potential physiological compound. Through its extracellular phosphatase activity allows both the hydrolysis and the cellular uptake of these bioactive lipid mediators from the milieu, regulating signal transduction in different cellular processes. It is for instance essential for the extracellular hydrolysis of S1P and subsequent conversion into intracellular S1P. Involved in the regulation of inflammation, platelets activation, cell proliferation and migration among other processes. May also have an intracellular activity to regulate phospholipid-mediated signaling pathways. The protein is Phospholipid phosphatase 1 of Rattus norvegicus (Rat).